The following is a 623-amino-acid chain: Putative ABC transporter ATP-binding protein MG014 (623 aa).

Residues 16 to 325 enclose the ABC transmembrane type-1 domain; it reads LILAPFFTFA…YIVLGFILTS (310 aa). Helical transmembrane passes span 27 to 47, 81 to 101, 157 to 177, 181 to 201, 266 to 286, and 307 to 327; these read IVID…VFSI, VLAT…LISI, FLRL…FAVT, DMSI…GILN, NIPF…LLVF, and IFAF…TSLT. Positions 365 to 611 constitute an ABC transporter domain; that stretch reads LEFRNISFGL…CSLYQKMKES (247 aa). 400–407 is a binding site for ATP; it reads GPTGSGKS.

This sequence belongs to the ABC transporter superfamily.

The protein resides in the cell membrane. This Mycoplasma genitalium (strain ATCC 33530 / DSM 19775 / NCTC 10195 / G37) (Mycoplasmoides genitalium) protein is Putative ABC transporter ATP-binding protein MG014.